A 262-amino-acid polypeptide reads, in one-letter code: Type III pantothenate kinase (262 aa).

6–13 (DVGNTNTV) serves as a coordination point for ATP. Substrate is bound by residues Tyr-101 and 108–111 (GADR). Asp-110 (proton acceptor) is an active-site residue. Asp-130 is a K(+) binding site. Thr-133 contributes to the ATP binding site. Thr-186 provides a ligand contact to substrate.

It belongs to the type III pantothenate kinase family. As to quaternary structure, homodimer. NH4(+) is required as a cofactor. Requires K(+) as cofactor.

It localises to the cytoplasm. The enzyme catalyses (R)-pantothenate + ATP = (R)-4'-phosphopantothenate + ADP + H(+). The protein operates within cofactor biosynthesis; coenzyme A biosynthesis; CoA from (R)-pantothenate: step 1/5. Functionally, catalyzes the phosphorylation of pantothenate (Pan), the first step in CoA biosynthesis. This is Type III pantothenate kinase from Desulforapulum autotrophicum (strain ATCC 43914 / DSM 3382 / VKM B-1955 / HRM2) (Desulfobacterium autotrophicum).